We begin with the raw amino-acid sequence, 427 residues long: tRNA(Ile)-lysidine synthase (427 aa).

Residue 29–34 (SGGVDS) coordinates ATP.

Belongs to the tRNA(Ile)-lysidine synthase family.

It localises to the cytoplasm. It carries out the reaction cytidine(34) in tRNA(Ile2) + L-lysine + ATP = lysidine(34) in tRNA(Ile2) + AMP + diphosphate + H(+). Functionally, ligates lysine onto the cytidine present at position 34 of the AUA codon-specific tRNA(Ile) that contains the anticodon CAU, in an ATP-dependent manner. Cytidine is converted to lysidine, thus changing the amino acid specificity of the tRNA from methionine to isoleucine. This Thermosipho africanus (strain TCF52B) protein is tRNA(Ile)-lysidine synthase.